The chain runs to 388 residues: Succinate--CoA ligase [ADP-forming] subunit beta (388 aa).

Residues 9–244 (KELFARRGLP…VTQEDAREAH (236 aa)) form the ATP-grasp domain. Residues K46, 53–55 (GRG), E99, T102, and E107 contribute to the ATP site. The Mg(2+) site is built by N199 and D213. Residues N264 and 321–323 (GIV) each bind substrate.

This sequence belongs to the succinate/malate CoA ligase beta subunit family. Heterotetramer of two alpha and two beta subunits. The cofactor is Mg(2+).

It catalyses the reaction succinate + ATP + CoA = succinyl-CoA + ADP + phosphate. It carries out the reaction GTP + succinate + CoA = succinyl-CoA + GDP + phosphate. It participates in carbohydrate metabolism; tricarboxylic acid cycle; succinate from succinyl-CoA (ligase route): step 1/1. Functionally, succinyl-CoA synthetase functions in the citric acid cycle (TCA), coupling the hydrolysis of succinyl-CoA to the synthesis of either ATP or GTP and thus represents the only step of substrate-level phosphorylation in the TCA. The beta subunit provides nucleotide specificity of the enzyme and binds the substrate succinate, while the binding sites for coenzyme A and phosphate are found in the alpha subunit. In Hamiltonella defensa subsp. Acyrthosiphon pisum (strain 5AT), this protein is Succinate--CoA ligase [ADP-forming] subunit beta.